Here is a 180-residue protein sequence, read N- to C-terminus: Isopentenyl-diphosphate Delta-isomerase (180 aa).

Residues histidine 26 and histidine 32 each coordinate Mn(2+). The 139-residue stretch at 30-168 (ALHLAFSVLL…PELFTAWFPQ (139 aa)) folds into the Nudix hydrolase domain. The active site involves cysteine 70. Cysteine 70 is a binding site for Mg(2+). Mn(2+) is bound at residue histidine 72. A Mg(2+)-binding site is contributed by glutamate 90. Residues glutamate 117 and glutamate 119 each coordinate Mn(2+). The active site involves glutamate 119.

This sequence belongs to the IPP isomerase type 1 family. It depends on Mg(2+) as a cofactor. Mn(2+) is required as a cofactor.

The protein resides in the cytoplasm. It catalyses the reaction isopentenyl diphosphate = dimethylallyl diphosphate. Its pathway is isoprenoid biosynthesis; dimethylallyl diphosphate biosynthesis; dimethylallyl diphosphate from isopentenyl diphosphate: step 1/1. In terms of biological role, catalyzes the 1,3-allylic rearrangement of the homoallylic substrate isopentenyl (IPP) to its highly electrophilic allylic isomer, dimethylallyl diphosphate (DMAPP). The chain is Isopentenyl-diphosphate Delta-isomerase from Photobacterium profundum (strain SS9).